A 248-amino-acid polypeptide reads, in one-letter code: Metallo-beta-lactamase type 2 (248 aa).

Residues 1 to 21 (MKGLKGLLVLALGFTGLQVFG) form the signal peptide. Residues His97, His99, Asp101, His160, and Cys179 each contribute to the Zn(2+) site. Lys182 serves as a coordination point for substrate. His221 is a binding site for Zn(2+).

Belongs to the metallo-beta-lactamase superfamily. Class-B beta-lactamase family. Monomer. Zn(2+) is required as a cofactor.

Its subcellular location is the periplasm. The catalysed reaction is a beta-lactam + H2O = a substituted beta-amino acid. In terms of biological role, confers resistance to the different beta-lactams antibiotics (penicillin, cephalosporin and carbapenem) via the hydrolysis of the beta-lactam ring. The sequence is that of Metallo-beta-lactamase type 2 (blaB8) from Elizabethkingia meningoseptica (Chryseobacterium meningosepticum).